The following is a 37-amino-acid chain: Serrulin (37 aa).

The interval 16-37 is disordered; the sequence is FGGGGIGGGGFGGGYGGGKIKG. Lysine amide is present on lysine 36.

Expressed in hemocytes (at protein level).

It localises to the secreted. Antimicrobial protein with activity against Gram-positive and Gram-negative bacteria, filamentous fungus, and yeast. Was tested against Micrococcus luteus A270 (MIC=0.5-1 uM), Echerichia coli SBS 363 (MIC=9-16 uM), Pseudomonas aeruginosa (MIC=0.01-0.3 uM), Aspergillus niger (MIC=3-6 uM), and Candida albicans MDM8 (MIC=1.5-3 uM). Has no hemolytic activity against human erythrocytes. The sequence is that of Serrulin from Tityus serrulatus (Brazilian scorpion).